We begin with the raw amino-acid sequence, 169 residues long: MAGSELRAELEQRLGALAIRTEVVEHPEVFTIEEMMPHIQHLKGAHSKNLFLKDKKKKNYWLVTVLHDRQINLNDLGKQLGVGSGNLRFADETAMLEKLKVGQGCATPLSLFCDDGDVKFVLDSAFLEGGHEKVYFHPMTNAATMGLSPEDFLIFVKATGHDPIILNFD.

This sequence belongs to the PRORSD1 family.

This Mus musculus (Mouse) protein is Prolyl-tRNA synthetase associated domain-containing protein 1 (Prorsd1).